The following is an 89-amino-acid chain: Protein FAM25A (89 aa).

It belongs to the FAM25 family.

The protein is Protein FAM25A of Mus musculus (Mouse).